The sequence spans 273 residues: NH(3)-dependent NAD(+) synthetase (273 aa).

45–52 serves as a coordination point for ATP; it reads GISGGQDS. A Mg(2+)-binding site is contributed by aspartate 51. Arginine 139 is a binding site for deamido-NAD(+). An ATP-binding site is contributed by threonine 159. Glutamate 164 is a binding site for Mg(2+). Deamido-NAD(+) is bound by residues lysine 172 and aspartate 179. ATP is bound by residues lysine 188 and threonine 210. 259 to 260 is a deamido-NAD(+) binding site; the sequence is HK.

Belongs to the NAD synthetase family. As to quaternary structure, homodimer.

It carries out the reaction deamido-NAD(+) + NH4(+) + ATP = AMP + diphosphate + NAD(+) + H(+). Its pathway is cofactor biosynthesis; NAD(+) biosynthesis; NAD(+) from deamido-NAD(+) (ammonia route): step 1/1. Functionally, catalyzes the ATP-dependent amidation of deamido-NAD to form NAD. Uses ammonia as a nitrogen source. In Bacillus pumilus (strain SAFR-032), this protein is NH(3)-dependent NAD(+) synthetase.